A 293-amino-acid polypeptide reads, in one-letter code: Dehydrodolichyl diphosphate synthase complex subunit NUS1 (293 aa).

3 helical membrane-spanning segments follow: residues 1-23 (MTGL…RTLT), 35-56 (WIWR…GFTL), and 117-135 (IASL…ISVY). Residues N144 and N271 are each glycosylated (N-linked (GlcNAc...) asparagine). An RXG motif; crucial for prenyltransferase activity motif is present at residues 290 to 292 (RLG). Residues L291 and G292 each coordinate isopentenyl diphosphate.

It belongs to the UPP synthase family. The active dehydrodolichyl diphosphate synthase complex is a heterotetramer composed of a dimer of heterodimer of DHDDS and NUS1. Interacts with NPC2. The cofactor is Mg(2+).

It is found in the endoplasmic reticulum membrane. It carries out the reaction n isopentenyl diphosphate + (2E,6E)-farnesyl diphosphate = a di-trans,poly-cis-polyprenyl diphosphate + n diphosphate. The protein operates within protein modification; protein glycosylation. It participates in lipid metabolism. Its activity is regulated as follows. Activated by phospholipids including cardiolipin, phosphatidylcholine, phosphatidylethanolamine, phosphatidylinositol and phosphatidylserine. In terms of biological role, with DHDDS, forms the dehydrodolichyl diphosphate synthase (DDS) complex, an essential component of the dolichol monophosphate (Dol-P) biosynthetic machinery. Both subunits contribute to enzymatic activity, i.e. condensation of multiple copies of isopentenyl pyrophosphate (IPP) to farnesyl pyrophosphate (FPP) to produce dehydrodolichyl diphosphate (Dedol-PP), a precursor of dolichol phosphate which is utilized as a sugar carrier in protein glycosylation in the endoplasmic reticulum (ER). Synthesizes long-chain polyprenols, mostly of C95 and C100 chain length. Regulates the glycosylation and stability of nascent NPC2, thereby promoting trafficking of LDL-derived cholesterol. Acts as a specific receptor for the N-terminus of Nogo-B, a neural and cardiovascular regulator. The polypeptide is Dehydrodolichyl diphosphate synthase complex subunit NUS1 (Homo sapiens (Human)).